The sequence spans 286 residues: F-box/SPRY domain-containing protein 1 (286 aa).

Alanine 2 is subject to N-acetylalanine. The region spanning alanine 33 to leucine 82 is the F-box domain. Residues leucine 92–leucine 284 enclose the B30.2/SPRY domain.

Belongs to the FBXO45/Fsn family. As to quaternary structure, forms a complex with MYCBP2 and SKP1. Interacts with HEY1; leading to FBXO45 nuclear translocation. Interacts (via SPRY domain) with CDH2.

Its subcellular location is the secreted. The protein resides in the postsynaptic cell membrane. It is found in the presynaptic cell membrane. It localises to the nucleus. It functions in the pathway protein modification; protein ubiquitination. Its function is as follows. Component of E3 ubiquitin ligase complex consisting of FBXO45, MYCBP2 and SKP1. Functions in substrate recognition but also plays an important role in assembly of the complex. Required for normal neuromuscular synaptogenesis, axon pathfinding and neuronal migration. Regulates neuron migration during brain development through interaction with N-cadherin/CDH2 after secretion via a non-classical mechanism. Plays a role in the regulation of neurotransmission at mature neurons. May control synaptic activity by controlling UNC13A via ubiquitin dependent pathway. Specifically recognizes TP73, promoting its ubiquitination and degradation. Polyubiquitinates NMNAT2, an adenylyltransferase that acts as an axon maintenance factor, and regulates its stability and degradation by the proteasome. Also acts by ubiquitinating FBXW7 during prolonged mitotic arrest and promotes FBXW7 proteasomal degradation. Induces subsequently an increase in mitotic slippage and prevents mitotic cell death. In response to influenza infection, mediates interferon-lambda receptor IFNLR1 polyubiquitination and degradation through the ubiquitin-proteasome system by docking with its intracellular receptor domain. This chain is F-box/SPRY domain-containing protein 1 (FBXO45), found in Homo sapiens (Human).